Consider the following 228-residue polypeptide: 2,3-bisphosphoglycerate-dependent phosphoglycerate mutase (228 aa).

Substrate contacts are provided by residues 8 to 15 (RHGLSEWN), 21 to 22 (TG), Arg-60, 87 to 90 (ERHY), Lys-98, 114 to 115 (RR), and 183 to 184 (GN). His-9 acts as the Tele-phosphohistidine intermediate in catalysis. The active-site Proton donor/acceptor is the Glu-87.

The protein belongs to the phosphoglycerate mutase family. BPG-dependent PGAM subfamily.

The catalysed reaction is (2R)-2-phosphoglycerate = (2R)-3-phosphoglycerate. The protein operates within carbohydrate degradation; glycolysis; pyruvate from D-glyceraldehyde 3-phosphate: step 3/5. Catalyzes the interconversion of 2-phosphoglycerate and 3-phosphoglycerate. This Enterococcus faecalis (strain ATCC 700802 / V583) protein is 2,3-bisphosphoglycerate-dependent phosphoglycerate mutase.